A 267-amino-acid chain; its full sequence is 4-hydroxy-tetrahydrodipicolinate reductase (267 aa).

NAD(+) is bound by residues 8–13 (GAAGRM) and D34. R35 lines the NADP(+) pocket. NAD(+) contacts are provided by residues 98 to 100 (GTT) and 122 to 125 (AANF). The active-site Proton donor/acceptor is H155. Residue H156 coordinates (S)-2,3,4,5-tetrahydrodipicolinate. K159 (proton donor) is an active-site residue. 165 to 166 (GT) provides a ligand contact to (S)-2,3,4,5-tetrahydrodipicolinate.

The protein belongs to the DapB family.

Its subcellular location is the cytoplasm. It carries out the reaction (S)-2,3,4,5-tetrahydrodipicolinate + NAD(+) + H2O = (2S,4S)-4-hydroxy-2,3,4,5-tetrahydrodipicolinate + NADH + H(+). The catalysed reaction is (S)-2,3,4,5-tetrahydrodipicolinate + NADP(+) + H2O = (2S,4S)-4-hydroxy-2,3,4,5-tetrahydrodipicolinate + NADPH + H(+). The protein operates within amino-acid biosynthesis; L-lysine biosynthesis via DAP pathway; (S)-tetrahydrodipicolinate from L-aspartate: step 4/4. In terms of biological role, catalyzes the conversion of 4-hydroxy-tetrahydrodipicolinate (HTPA) to tetrahydrodipicolinate. This chain is 4-hydroxy-tetrahydrodipicolinate reductase, found in Ectopseudomonas mendocina (strain ymp) (Pseudomonas mendocina).